We begin with the raw amino-acid sequence, 526 residues long: G-protein coupled receptor 161 (526 aa).

The Extracellular portion of the chain corresponds to Met-1–Ser-27. N-linked (GlcNAc...) asparagine glycans are attached at residues Asn-2, Asn-6, and Asn-12. Residues Val-28–Leu-48 form a helical membrane-spanning segment. Residues Tyr-49 to Lys-60 are Cytoplasmic-facing. The chain crosses the membrane as a helical span at residues Phe-61 to Val-81. The Extracellular segment spans residues Ala-82–Phe-98. Residues Cys-96 and Cys-174 are joined by a disulfide bond. N-linked (GlcNAc...) asparagine glycosylation occurs at Asn-97. Residues Thr-99 to Ile-119 form a helical membrane-spanning segment. At Asp-120–Arg-139 the chain is on the cytoplasmic side. The chain crosses the membrane as a helical span at residues Ala-140–Phe-160. The Extracellular segment spans residues Gly-161 to Ala-186. Residues Phe-187–Ile-207 form a helical membrane-spanning segment. Over Phe-208–Phe-263 the chain is Cytoplasmic. A disordered region spans residues Ser-231–Arg-250. The helical transmembrane segment at Ile-264–Ile-284 threads the bilayer. The Extracellular segment spans residues Ser-285 to Glu-300. The helical transmembrane segment at Thr-301–Trp-321 threads the bilayer. Residues Asn-322–Met-526 lie on the Cytoplasmic side of the membrane. A disordered region spans residues Ile-505 to Met-526. The span at Asp-512–Met-526 shows a compositional bias: acidic residues.

Belongs to the G-protein coupled receptor 1 family.

Its subcellular location is the cell projection. The protein resides in the cilium membrane. It localises to the cell membrane. Functionally, key negative regulator of Shh signaling during neural tube development. Recruited to primary cilia and acts as a regulator of the PKA-dependent basal repression machinery in Shh signaling by increasing cAMP levels, leading to promote the PKA-dependent processing of gli3 into gli3r and repress the Shh signaling. In presence of shh, it is removed from primary cilia, preventing its activity and allowing activation of the Shh signaling. Required in left/right patterning by modulating Ca(2+) levels in the cells surrounding the Kupffer vesicle. This is G-protein coupled receptor 161 (gpr161) from Danio rerio (Zebrafish).